The chain runs to 248 residues: Tetraspanin-16 (248 aa).

The Cytoplasmic portion of the chain corresponds to 1 to 7; that stretch reads MSEIRTG. The chain crosses the membrane as a helical span at residues 8-28; the sequence is FLTMATIILICIGLTMTGTGL. Over 29 to 44 the chain is Extracellular; it reads YYRKTVSKCIRETDGS. The chain crosses the membrane as a helical span at residues 45-65; sequence FVVIGLLLLVIPQFALYAICC. Topologically, residues 66–69 are cytoplasmic; it reads HSKR. The helical transmembrane segment at 70–90 threads the bilayer; it reads MFTIYIYAMIFVSIVLGGYSL. Over 91–208 the chain is Extracellular; sequence KCFIYNTTFG…MSILKAIVHQ (118 aa). Asn-96 and Asn-141 each carry an N-linked (GlcNAc...) asparagine glycan. A helical transmembrane segment spans residues 209–229; sequence WKYLSMFSYPALFLVCLSLAI. At 230–248 the chain is on the cytoplasmic side; it reads SRSIMDTFDEPDDYRGYYS.

Belongs to the tetraspanin (TM4SF) family.

The protein resides in the membrane. Functionally, may be involved in the regulation of cell differentiation. This Arabidopsis thaliana (Mouse-ear cress) protein is Tetraspanin-16 (TET16).